A 444-amino-acid polypeptide reads, in one-letter code: Homogentisate 1,2-dioxygenase (444 aa).

The active-site Proton acceptor is the His298. Fe cation is bound by residues His341 and Glu347. Tyr356 and His377 together coordinate homogentisate. His377 is a binding site for Fe cation.

This sequence belongs to the homogentisate dioxygenase family. In terms of assembly, hexamer; dimer of trimers. Fe cation serves as cofactor.

It carries out the reaction homogentisate + O2 = 4-maleylacetoacetate + H(+). Its pathway is amino-acid degradation; L-phenylalanine degradation; acetoacetate and fumarate from L-phenylalanine: step 4/6. In terms of biological role, involved in the catabolism of homogentisate (2,5-dihydroxyphenylacetate or 2,5-OH-PhAc), a central intermediate in the degradation of phenylalanine and tyrosine. Catalyzes the oxidative ring cleavage of the aromatic ring of homogentisate to yield maleylacetoacetate. The chain is Homogentisate 1,2-dioxygenase from Burkholderia ambifaria (strain ATCC BAA-244 / DSM 16087 / CCUG 44356 / LMG 19182 / AMMD) (Burkholderia cepacia (strain AMMD)).